Here is a 122-residue protein sequence, read N- to C-terminus: Large ribosomal subunit protein bL12 (122 aa).

This sequence belongs to the bacterial ribosomal protein bL12 family. Homodimer. Part of the ribosomal stalk of the 50S ribosomal subunit. Forms a multimeric L10(L12)X complex, where L10 forms an elongated spine to which 2 to 4 L12 dimers bind in a sequential fashion. Binds GTP-bound translation factors.

Its function is as follows. Forms part of the ribosomal stalk which helps the ribosome interact with GTP-bound translation factors. Is thus essential for accurate translation. This is Large ribosomal subunit protein bL12 from Bdellovibrio bacteriovorus (strain ATCC 15356 / DSM 50701 / NCIMB 9529 / HD100).